The primary structure comprises 331 residues: D-alanine--D-alanine ligase (331 aa).

The 207-residue stretch at 121–327 (KLWYDALGIP…FSQFLENCVR (207 aa)) folds into the ATP-grasp domain. 151–206 (AFESWGKVFVKAARQGSSVGCYQVNQVEELSEAINKAFTFSDQVLIEKSVVPRELE) contacts ATP. Positions 281, 294, and 296 each coordinate Mg(2+).

Belongs to the D-alanine--D-alanine ligase family. Mg(2+) is required as a cofactor. Mn(2+) serves as cofactor.

The protein localises to the cytoplasm. It catalyses the reaction 2 D-alanine + ATP = D-alanyl-D-alanine + ADP + phosphate + H(+). It participates in cell wall biogenesis; peptidoglycan biosynthesis. In terms of biological role, cell wall formation. The protein is D-alanine--D-alanine ligase of Vibrio atlanticus (strain LGP32) (Vibrio splendidus (strain Mel32)).